The primary structure comprises 608 residues: Pentatricopeptide repeat-containing protein 1, apicoplast (608 aa).

PPR repeat units lie at residues 165 to 199, 200 to 230, 236 to 270, 336 to 370, 372 to 402, 410 to 445, and 446 to 480; these read TTLA…NIKP, DLVS…MIES, NYEI…PFVE, QYSE…GKYM, SIFV…LKND, NVNI…LLTP, and NNLS…KLLN.

It belongs to the PPR family. P subfamily. Homodimer.

Its subcellular location is the plastid. The protein resides in the apicoplast. Its function is as follows. Binds to apicoplast RNA transcripts, preferentially to the motif UUAU, and protects RNA transcripts from degradation by ribonuclease. The polypeptide is Pentatricopeptide repeat-containing protein 1, apicoplast (Plasmodium falciparum (isolate 3D7)).